The primary structure comprises 73 residues: Putative membrane protein insertion efficiency factor (73 aa).

It belongs to the UPF0161 family.

The protein localises to the cell inner membrane. In terms of biological role, could be involved in insertion of integral membrane proteins into the membrane. This Neisseria meningitidis serogroup C / serotype 2a (strain ATCC 700532 / DSM 15464 / FAM18) protein is Putative membrane protein insertion efficiency factor.